Here is a 608-residue protein sequence, read N- to C-terminus: Scaffold protein salvador (608 aa).

Disordered regions lie at residues 17–37, 64–145, 157–202, 220–243, 264–293, and 345–425; these read SRRN…YMKK, STSP…SQNS, MRRQ…YDAD, PHSP…QQHA, QPRY…HTQL, and PQHH…ELPL. Positions 22–37 are enriched in basic and acidic residues; sequence EKSQHKEGVVGKYMKK. The short motif at 32–38 is the Ferm-binding motif (FBM) element; that stretch reads GKYMKKD. Polar residues predominate over residues 64-89; sequence STSPSCEFHPRSSSTSRNTYSCTDSQ. Residues 108-125 are compositionally biased toward basic residues; sequence SHSHPHSLPHPSHPHVRS. Low complexity-rich tracts occupy residues 160–172, 229–242, and 275–289; these read QQSS…TSSP, PPQQ…HQQH, and QQQQ…QQLQ. Residues 274–294 are a coiled coil; that stretch reads MQQQQQQQQQQQQQLQHTQLA. Residues 358-373 show a composition bias toward gly residues; that stretch reads GSGGGSLSGSGRGGSS. Phosphoserine is present on residues serine 413 and serine 416. WW domains lie at 423-456 and 458-491; these read LPLP…HPLE and EGLP…HPCL. The 48-residue stretch at 552 to 599 folds into the SARAH domain; it reads LLQFNMFSLPELEGFDSMLVRLFKQELGTIVGFYERYRRALILEKNRR.

As to quaternary structure, interacts with Wts via its WW domains. Interacts (via FBM motif) with Mer (via FERM domain). Interacts with Kibra. Interacts with Hpo (via SARAH domain). Interacts with jub. In terms of processing, phosphorylated by Hpo. In terms of tissue distribution, third instar larvae eye disk, expressed in a stripe in the morphogenetic furrow, decreases in the region of the second mitotic wave (SMW) and increases once again posterior to the SMW.

Functionally, plays a key role in the Hippo/SWH (Sav/Wts/Hpo) signaling pathway, a signaling pathway that plays a pivotal role in organ size control and tumor suppression by restricting proliferation and promoting apoptosis. The core of this pathway is composed of a kinase cascade wherein Hippo (Hpo), in complex with its regulatory protein Salvador (Sav), phosphorylates and activates Warts (Wts) in complex with its regulatory protein Mats, which in turn phosphorylates and inactivates the Yorkie (Yki) oncoprotein. The Hippo/SWH signaling pathway inhibits the activity of the transcriptional complex formed by Scalloped (sd) and Yki and the target genes of this pathway include cyclin-E (cycE), diap1 and bantam. Required for cell cycle exit in eye imaginal disk and hid-induced apoptotic cell deaths that are part of normal retinal development. Activation of Drice in eye imaginal disk by either Hid or Rpr is almost completely blocked by Sav expression. The sequence is that of Scaffold protein salvador (sav) from Drosophila melanogaster (Fruit fly).